Reading from the N-terminus, the 447-residue chain is Selenide, water dikinase 3 (447 aa).

U50 is an active-site residue. Residue U50 is a non-standard amino acid, selenocysteine. ATP-binding positions include K53, 103–105 (GMD), D123, D146, and 197–200 (GGQT). A Mg(2+)-binding site is contributed by D105. D146 contributes to the Mg(2+) binding site. Mg(2+) is bound at residue D301.

It belongs to the selenophosphate synthase 1 family. As to quaternary structure, homodimer. Mg(2+) is required as a cofactor. In the embryo, expressed in retina, olfactory vesicles, tectum, pronephros ducts and myotomes at 24 hours post-fertilization and in retina, tectum, liver and intestinal bulb 3 days after fertilization.

It catalyses the reaction hydrogenselenide + ATP + H2O = selenophosphate + AMP + phosphate + 2 H(+). Synthesizes selenophosphate from selenide and ATP. In Danio rerio (Zebrafish), this protein is Selenide, water dikinase 3.